The primary structure comprises 1411 residues: MKSLLDLFKQFTPDEHFDAIRIGMASPEKIRSWSFGEVKKPETINYRTFKPERDGLFCAKIFGPIKDYECLCGKYKRLKHRGVICEKCGVEVTQTKVRRERMGHIDLAAPCAHIWFLKSLPSRLGMVLDMTLRDIERVLYFEAYVVTDPGMTALKKLSIMSEEDYEAKRKEYGDEFIAKMGAEGIKDLLESIDIDLSIEKLRGDLTGSEVKVKKNAKRLKVLEAFKKSGIKPEWMVLQVLPVLPPDLRPLVPLDGGRFATSDLNDLYRRVINRNSRLRRLLELKAPEIIARNEKRMLQEAVDSLLDNGRRGKAMTGANKRALKSLADMIKGKSGRFRQNLLGKRVDYSGRSVITVGPTLKLHQCGLPKLMALELFKPFIFSRLEAMGIATTIKAAKKEVESGTPVVWDILEEVIKEHPVMLNRAPTLHRLGIQAFEPILIEGKAIQLHPLVCSAFNADFDGDQMAVHVPLSVEAQMEARTLMLASNNVLFPASGEPSIVPSQDVVLGLYYATRDRINGKGEGLVFADTGEVQRAFDAGEVELAARITVRLTEWSKPKDSDALVPTTALVETTAGRALLSEILPPGLPFSYVNKALKKKEISRLINVSFRKCGLKATVVFADKLLQNGFRLATRAGISIAIDDMLVPPQKAGIIERSEREVKEFEQQYVSGLVTAGERYNKVVDIWGKAGDEVSKAMMAQLSKEQVIDRHGQQVSQESFNSIYMMADSGARGSAAQIRQVAGMRGLMAKPDGSIIETPITANFREGLNVLEYFISTHGARKGLADTALKTANSGYLTRRLVDVTQDLVVTEEDCETANGSLMRAIVEGGEVIESLRDRILGRTAAEEVLHPENRMVLVPVGVMLDEDLIEELEAAGVDEVKVRTALTCETRYGLCAKCYGRDLGRGGLINLGEAVGVIAAQSIGEPGTQLTMRTFHIGGAASRAVIASRVEAKSNGVIGFSSTMRYVSNTKGELVVIARSGEIVIHDEYGRERERHKVPYGATLTVNADQNVKAGTVLAKWEPLTRPIITEFAGRTKFENVEEGLTVARQLDEVTGLSTLVVIDPKRRGAAKVVRPQVKLIDAQGNEVKIPGTDHSVTIGFQVGALIQVRDGQDVGPGEVLARIPVEGQKTRDITGGLPRVAELFEARTPKDKGTLAEMTGTVSFGKETKGKVRLQITDPEGHVFEELVPKEKNILVHEGQVVNKGESIVDGPADPQDILRLLGIEELSRYIVDEVQDVYRLQGVKINDKHIEVIVRQMLRRVVVEDAGESNYISGEQVERSEILNTNEALRAAGKIPAVYSNLLLGITKASLSTDSFISAASFQETTRVLTEAAIMGKRDELRGLKENVIVGRLIPAGTGLAYHQARKAKDAMDDAERRAIADAEAAEMAAQAEVPELDGSSVTASDAAAD.

Residues cysteine 70, cysteine 72, cysteine 85, and cysteine 88 each coordinate Zn(2+). Mg(2+) is bound by residues aspartate 458, aspartate 460, and aspartate 462. Residues cysteine 813, cysteine 887, cysteine 894, and cysteine 897 each coordinate Zn(2+). Residues 1391–1411 (AQAEVPELDGSSVTASDAAAD) are disordered.

This sequence belongs to the RNA polymerase beta' chain family. In terms of assembly, the RNAP catalytic core consists of 2 alpha, 1 beta, 1 beta' and 1 omega subunit. When a sigma factor is associated with the core the holoenzyme is formed, which can initiate transcription. The cofactor is Mg(2+). Requires Zn(2+) as cofactor.

The catalysed reaction is RNA(n) + a ribonucleoside 5'-triphosphate = RNA(n+1) + diphosphate. DNA-dependent RNA polymerase catalyzes the transcription of DNA into RNA using the four ribonucleoside triphosphates as substrates. The chain is DNA-directed RNA polymerase subunit beta' from Verminephrobacter eiseniae (strain EF01-2).